We begin with the raw amino-acid sequence, 635 residues long: 1-deoxy-D-xylulose-5-phosphate synthase (635 aa).

Residues H72 and 113–115 (GHA) contribute to the thiamine diphosphate site. Residue D144 participates in Mg(2+) binding. Residues 145-146 (GA), N174, Y286, and E369 each bind thiamine diphosphate. Residue N174 coordinates Mg(2+).

It belongs to the transketolase family. DXPS subfamily. In terms of assembly, homodimer. Mg(2+) serves as cofactor. Requires thiamine diphosphate as cofactor.

The catalysed reaction is D-glyceraldehyde 3-phosphate + pyruvate + H(+) = 1-deoxy-D-xylulose 5-phosphate + CO2. Its pathway is metabolic intermediate biosynthesis; 1-deoxy-D-xylulose 5-phosphate biosynthesis; 1-deoxy-D-xylulose 5-phosphate from D-glyceraldehyde 3-phosphate and pyruvate: step 1/1. In terms of biological role, catalyzes the acyloin condensation reaction between C atoms 2 and 3 of pyruvate and glyceraldehyde 3-phosphate to yield 1-deoxy-D-xylulose-5-phosphate (DXP). This chain is 1-deoxy-D-xylulose-5-phosphate synthase, found in Gloeothece citriformis (strain PCC 7424) (Cyanothece sp. (strain PCC 7424)).